Reading from the N-terminus, the 611-residue chain is Actin-interacting protein 1 (611 aa).

WD repeat units lie at residues 57–96 (EHSH…HILK), 145–185 (GQAR…FKST), 188–227 (EHTK…KTGV), 237–276 (AHSG…VEKT), 322–361 (GHNK…SNRV), 446–485 (PISY…VSEV), 489–528 (VHPA…ELAH), 534–573 (FHTA…DHPI), and 579–610 (HAMS…WNVP).

The protein belongs to the WD repeat AIP1 family.

It localises to the cytoplasm. It is found in the cytoskeleton. Functionally, induces disassembly of actin filaments in conjunction with ADF/cofilin family proteins. Regulator of actin organization in myofibrils. This Caenorhabditis elegans protein is Actin-interacting protein 1 (unc-78).